Consider the following 504-residue polypeptide: Arabinose import ATP-binding protein AraG (504 aa).

2 consecutive ABC transporter domains span residues 8-243 (LSFR…MVGR) and 256-499 (YGEE…MPKV). Position 40-47 (40-47 (GENGAGKS)) interacts with ATP.

It belongs to the ABC transporter superfamily. Arabinose importer (TC 3.A.1.2.2) family. The complex is composed of two ATP-binding proteins (AraG), two transmembrane proteins (AraH) and a solute-binding protein (AraF).

It localises to the cell inner membrane. It catalyses the reaction L-arabinose(out) + ATP + H2O = L-arabinose(in) + ADP + phosphate + H(+). Its function is as follows. Part of the ABC transporter complex AraFGH involved in arabinose import. Responsible for energy coupling to the transport system. The polypeptide is Arabinose import ATP-binding protein AraG (Shigella boydii serotype 4 (strain Sb227)).